The chain runs to 407 residues: Transmembrane protein 184B (407 aa).

Positions Met1–Pro28 are enriched in low complexity. The segment at Met1–Ser31 is disordered. The next 7 helical transmembrane spans lie at Phe40 to Ile60, Ile84 to Asn104, Phe121 to Met141, Leu178 to Gly198, Val214 to Phe234, Phe249 to Leu269, and Val290 to Leu310. The segment at Thr369–Asn395 is disordered. A phosphoserine mark is found at Ser388, Ser402, and Ser403.

Belongs to the TMEM184 family.

It is found in the membrane. Its function is as follows. May activate the MAP kinase signaling pathway. This Mus musculus (Mouse) protein is Transmembrane protein 184B (Tmem184b).